We begin with the raw amino-acid sequence, 61 residues long: Small ribosomal subunit protein uS14 (61 aa).

Zn(2+) contacts are provided by Cys-24, Cys-27, Cys-40, and Cys-43.

Belongs to the universal ribosomal protein uS14 family. Zinc-binding uS14 subfamily. In terms of assembly, part of the 30S ribosomal subunit. Contacts proteins S3 and S10. The cofactor is Zn(2+).

In terms of biological role, binds 16S rRNA, required for the assembly of 30S particles and may also be responsible for determining the conformation of the 16S rRNA at the A site. The polypeptide is Small ribosomal subunit protein uS14 (Thermus thermophilus (strain ATCC BAA-163 / DSM 7039 / HB27)).